A 121-amino-acid polypeptide reads, in one-letter code: Secretin (121 aa).

Residues 1–18 form the signal peptide; that stretch reads MAPRPLLLLLLLLGGSAA. Positions 19–26 are excised as a propeptide; the sequence is RPAPPRAR. The residue at position 54 (V54) is a Valine amide. Phosphoserine is present on S58. A propeptide spanning residues 58–121 is cleaved from the precursor; sequence SEQDAENSMA…AAAEGTLRPR (64 aa).

This sequence belongs to the glucagon family.

The protein localises to the secreted. Functionally, hormone involved in different processes, such as regulation of the pH of the duodenal content, food intake and water homeostasis. Exerts its biological effects by binding to secretin receptor (SCTR), a G-protein coupled receptor expressed in the basolateral domain of several cells. Acts as a key gastrointestinal hormone by regulating the pH of the duodenal content. Secreted by S cells of the duodenum in the crypts of Lieberkuehn and regulates the pH of the duodenum by (1) inhibiting the secretion of gastric acid from the parietal cells of the stomach and (2) stimulating the production of bicarbonate (NaHCO(3)) from the ductal cells of the pancreas. Production of bicarbonate is essential to neutralize the pH and ensure no damage is done to the small intestine by the gastric acid. In addition to regulating the pH of the duodenal content, plays a central role in diet induced thermogenesis: acts as a non-sympathetic brown fat (BAT) activator mediating prandial thermogenesis, which consequentially induces satiation. Mechanistically, secretin released by the gut after a meal binds to secretin receptor (SCTR) in brown adipocytes, activating brown fat thermogenesis by stimulating lipolysis, which is sensed in the brain and promotes satiation. Also able to stimulate lipolysis in white adipocytes. Also plays an important role in cellular osmoregulation: released into the systemic circulation in response to hyperosmolality and acts at different levels in the hypothalamus, pituitary and kidney to regulate water homeostasis. Also plays a role in the central nervous system, possibly by acting as a neuropeptide hormone: required for hippocampal synaptic function and neural progenitor cells maintenance. The sequence is that of Secretin from Homo sapiens (Human).